A 124-amino-acid chain; its full sequence is Heat-labile enterotoxin B chain (124 aa).

An N-terminal signal peptide occupies residues 1–21; sequence MNKVKCYVLFTALLSSLCAYG. Residues cysteine 30 and cysteine 107 are joined by a disulfide bond.

As to quaternary structure, heterohexamer of one A chain and of five B chains.

In terms of biological role, the biological activity of the toxin is produced by the A chain, which activates intracellular adenyl cyclase. The chain is Heat-labile enterotoxin B chain (eltB) from Escherichia coli O78:H11 (strain H10407 / ETEC).